The sequence spans 359 residues: Phosphatidylglycerol--prolipoprotein diacylglyceryl transferase (359 aa).

4 consecutive transmembrane segments (helical) span residues 24–44, 58–78, 98–118, and 124–144; these read VALRAYALFIIVGIVVAIVWG, VLDIAIWAVPFGLIGGRLYHV, VWQGGLGIWGAVALGGVGAWI, and GIPLPALGDAVAPAILLAQAI. Residue arginine 146 participates in a 1,2-diacyl-sn-glycero-3-phospho-(1'-sn-glycerol) binding. 3 helical membrane-spanning segments follow: residues 193–213, 222–243, and 258–278; these read FVVHPTFLYEALWNVLIVLLL, IGHGRLFALYVAGYCAGRFWIE, and VNSFTSALVFVAALVYFFAAT. A disordered region spans residues 284-359; it reads PAELRPADGG…IDSKKDDAND (76 aa). A compositionally biased stretch (basic and acidic residues) spans 306 to 323; the sequence is IAQKEPEKNVEDAGKDEG. Positions 336 to 349 are enriched in low complexity; it reads ASTASTGGEAGTKT. Positions 350–359 are enriched in basic and acidic residues; it reads IDSKKDDAND.

Belongs to the Lgt family.

Its subcellular location is the cell membrane. It carries out the reaction L-cysteinyl-[prolipoprotein] + a 1,2-diacyl-sn-glycero-3-phospho-(1'-sn-glycerol) = an S-1,2-diacyl-sn-glyceryl-L-cysteinyl-[prolipoprotein] + sn-glycerol 1-phosphate + H(+). It participates in protein modification; lipoprotein biosynthesis (diacylglyceryl transfer). Functionally, catalyzes the transfer of the diacylglyceryl group from phosphatidylglycerol to the sulfhydryl group of the N-terminal cysteine of a prolipoprotein, the first step in the formation of mature lipoproteins. The polypeptide is Phosphatidylglycerol--prolipoprotein diacylglyceryl transferase (Rhodococcus jostii (strain RHA1)).